We begin with the raw amino-acid sequence, 329 residues long: GTP 3',8-cyclase (329 aa).

A Radical SAM core domain is found at 8 to 234 (AFARKFYYLR…QLRQRSDGPA (227 aa)). Residue R17 coordinates GTP. [4Fe-4S] cluster is bound by residues C24 and C28. Y30 contributes to the S-adenosyl-L-methionine binding site. C31 provides a ligand contact to [4Fe-4S] cluster. R68 is a binding site for GTP. S-adenosyl-L-methionine is bound at residue G72. Position 99 (T99) interacts with GTP. S123 contacts S-adenosyl-L-methionine. Residue K160 participates in GTP binding. An S-adenosyl-L-methionine-binding site is contributed by M194. 2 residues coordinate [4Fe-4S] cluster: C257 and C260. 262-264 (RLR) contacts GTP. C274 is a binding site for [4Fe-4S] cluster.

The protein belongs to the radical SAM superfamily. MoaA family. As to quaternary structure, monomer and homodimer. [4Fe-4S] cluster serves as cofactor.

It catalyses the reaction GTP + AH2 + S-adenosyl-L-methionine = (8S)-3',8-cyclo-7,8-dihydroguanosine 5'-triphosphate + 5'-deoxyadenosine + L-methionine + A + H(+). It participates in cofactor biosynthesis; molybdopterin biosynthesis. Its function is as follows. Catalyzes the cyclization of GTP to (8S)-3',8-cyclo-7,8-dihydroguanosine 5'-triphosphate. The chain is GTP 3',8-cyclase from Escherichia coli O139:H28 (strain E24377A / ETEC).